An 86-amino-acid polypeptide reads, in one-letter code: UPF0297 protein BBR47_19030 (86 aa).

It belongs to the UPF0297 family.

In Brevibacillus brevis (strain 47 / JCM 6285 / NBRC 100599), this protein is UPF0297 protein BBR47_19030.